Reading from the N-terminus, the 361-residue chain is Queuine tRNA-ribosyltransferase (361 aa).

Asp92 functions as the Proton acceptor in the catalytic mechanism. Substrate contacts are provided by residues 92–96 (DSGGF), Asp146, Gln189, and Gly216. Residues 247-253 (GVGKPAD) are RNA binding. Asp266 acts as the Nucleophile in catalysis. The RNA binding; important for wobble base 34 recognition stretch occupies residues 271-275 (TRSGR). Cys304, Cys306, Cys309, and His335 together coordinate Zn(2+).

The protein belongs to the queuine tRNA-ribosyltransferase family. As to quaternary structure, homodimer. Within each dimer, one monomer is responsible for RNA recognition and catalysis, while the other monomer binds to the replacement base PreQ1. It depends on Zn(2+) as a cofactor.

The enzyme catalyses 7-aminomethyl-7-carbaguanine + guanosine(34) in tRNA = 7-aminomethyl-7-carbaguanosine(34) in tRNA + guanine. The protein operates within tRNA modification; tRNA-queuosine biosynthesis. Catalyzes the base-exchange of a guanine (G) residue with the queuine precursor 7-aminomethyl-7-deazaguanine (PreQ1) at position 34 (anticodon wobble position) in tRNAs with GU(N) anticodons (tRNA-Asp, -Asn, -His and -Tyr). Catalysis occurs through a double-displacement mechanism. The nucleophile active site attacks the C1' of nucleotide 34 to detach the guanine base from the RNA, forming a covalent enzyme-RNA intermediate. The proton acceptor active site deprotonates the incoming PreQ1, allowing a nucleophilic attack on the C1' of the ribose to form the product. After dissociation, two additional enzymatic reactions on the tRNA convert PreQ1 to queuine (Q), resulting in the hypermodified nucleoside queuosine (7-(((4,5-cis-dihydroxy-2-cyclopenten-1-yl)amino)methyl)-7-deazaguanosine). In Rickettsia bellii (strain OSU 85-389), this protein is Queuine tRNA-ribosyltransferase.